Reading from the N-terminus, the 276-residue chain is Large ribosomal subunit protein uL2 (276 aa).

The tract at residues 219–276 (TVRGSAMNPNDHPHGGGEGRSPIGRPSPVTPWGKPALGYKTRKKNKHSDKFIVTGRKR) is disordered.

It belongs to the universal ribosomal protein uL2 family. As to quaternary structure, part of the 50S ribosomal subunit. Forms a bridge to the 30S subunit in the 70S ribosome.

Its function is as follows. One of the primary rRNA binding proteins. Required for association of the 30S and 50S subunits to form the 70S ribosome, for tRNA binding and peptide bond formation. It has been suggested to have peptidyltransferase activity; this is somewhat controversial. Makes several contacts with the 16S rRNA in the 70S ribosome. The polypeptide is Large ribosomal subunit protein uL2 (Alkaliphilus metalliredigens (strain QYMF)).